A 611-amino-acid polypeptide reads, in one-letter code: Protein Spindly-A (611 aa).

Residues 1–390 (MEESETVLKL…KENEKIKDEL (390 aa)) adopt a coiled-coil conformation. Positions 487 to 611 (TCTAESTDGR…PNATTQCPQQ (125 aa)) are disordered. Residues 493–511 (TDGRIHSKEDLSLSTKEQD) are compositionally biased toward basic and acidic residues. A compositionally biased stretch (polar residues) spans 552-567 (HNCSVTSASPRSTSED). Residues 570 to 583 (SESKRFDEEQEKRK) are compositionally biased toward basic and acidic residues. Residues 602 to 611 (PNATTQCPQQ) are compositionally biased toward polar residues.

The protein belongs to the Spindly family.

It is found in the chromosome. The protein localises to the centromere. The protein resides in the kinetochore. In terms of biological role, required for the localization of dynein and dynactin to the mitotic kintochore. Dynein is believed to control the initial lateral interaction between the kinetochore and spindle microtubules and to facilitate the subsequent formation of end-on kinetochore-microtubule attachments mediated by the NDC80 complex. The protein is Protein Spindly-A (spdl1-a) of Xenopus laevis (African clawed frog).